Here is a 305-residue protein sequence, read N- to C-terminus: tRNA dimethylallyltransferase (305 aa).

ATP is bound at residue glycine 8 to serine 15. Threonine 10–serine 15 provides a ligand contact to substrate.

Belongs to the IPP transferase family. In terms of assembly, monomer. The cofactor is Mg(2+).

The catalysed reaction is adenosine(37) in tRNA + dimethylallyl diphosphate = N(6)-dimethylallyladenosine(37) in tRNA + diphosphate. Catalyzes the transfer of a dimethylallyl group onto the adenine at position 37 in tRNAs that read codons beginning with uridine, leading to the formation of N6-(dimethylallyl)adenosine (i(6)A). This chain is tRNA dimethylallyltransferase, found in Mycobacterium sp. (strain JLS).